The chain runs to 233 residues: B-cell lymphoma/leukemia 10 (233 aa).

Methionine 1 bears the N-acetylmethionine mark. A CARD domain is found at leucine 13 to aspartate 101. Glycyl lysine isopeptide (Lys-Gly) (interchain with G-Cter in ubiquitin) cross-links involve residues lysine 17, lysine 31, and lysine 63. Over residues threonine 130–serine 141 the composition is skewed to polar residues. Disordered stretches follow at residues threonine 130–proline 149 and serine 186–glutamine 233. Serine 138 carries the phosphoserine modification. Residues proline 195–proline 205 are compositionally biased toward pro residues.

As to quaternary structure, homomultimer; homooligomerized following recruitment by CARD domain-containing proteins that form a nucleating helical template that recruits BCL10 via CARD-CARD interaction. Self-associates by CARD-CARD interaction and interacts with other CARD-proteins such as CARD9, CARD10, CARD11 and CARD14. Forms a complex with CARD14 and MALT1; resulting in the formation of a CBM (CARD14-BCL10-MALT1) complex. Forms a complex with CARD11 and MALT1; resulting in the formation of a CBM (CARD11-BCL10-MALT1) complex. Forms a complex with CARD9 and MALT1; resulting in the formation of a CBM (CARD9-BCL10-MALT1) complex. Found in a membrane raft complex, at least composed of BCL10, CARD11, DPP4 and IKBKB. Binds caspase-9 with its C-terminal domain. Interacts with TRAF2 and BIRC2/c-IAP2. Interacts with PELI2 and SOCS3; these interactions may be mutually exclusive. In terms of processing, phosphorylated. Phosphorylation results in dissociation from TRAF2 and binding to BIRC2/c-IAP2. Phosphorylated by IKBKB/IKKB. Ubiquitinated via both 'Lys-63'-linked and linear ('Met-1'-linked) polyubiquitin chains in response to T-cell receptor (TCR) activation. Ubiquitination is recognized by IKBKG/NEMO, the regulatory subunit of I-kappa-B kinase (IKK), and is required for TCR-induced NF-kappa-B activation. Linear ubiquitination at Lys-17, Lys-31 and Lys-63 is mediated by RNF31/HOIP; linear ubiquitination is recognized with much higher affinity than 'Lys-63'-linked ubiquitin by IKBKG/NEMO. CARD11 is required for linear ubiquitination by HOIP by promoting the targeting of BCL10 to RNF31/HOIP. Post-translationally, proteolytically cleaved by MALT1; required for T-cell activation.

The protein localises to the cytoplasm. It localises to the perinuclear region. Its subcellular location is the membrane raft. Plays a key role in both adaptive and innate immune signaling by bridging CARD domain-containing proteins to immune activation. Acts by channeling adaptive and innate immune signaling downstream of CARD domain-containing proteins CARD9, CARD11 and CARD14 to activate NF-kappa-B and MAP kinase p38 (MAPK11, MAPK12, MAPK13 and/or MAPK14) pathways which stimulate expression of genes encoding pro-inflammatory cytokines and chemokines. Recruited by activated CARD domain-containing proteins: homooligomerized CARD domain-containing proteins form a nucleating helical template that recruits BCL10 via CARD-CARD interaction, thereby promoting polymerization of BCL10, subsequent recruitment of MALT1 and formation of a CBM complex. This leads to activation of NF-kappa-B and MAP kinase p38 (MAPK11, MAPK12, MAPK13 and/or MAPK14) pathways which stimulate expression of genes encoding pro-inflammatory cytokines and chemokines. Activated by CARD9 downstream of C-type lectin receptors; CARD9-mediated signals are essential for antifungal immunity. Activated by CARD11 downstream of T-cell receptor (TCR) and B-cell receptor (BCR). Promotes apoptosis, pro-caspase-9 maturation and activation of NF-kappa-B via NIK and IKK. This Rattus norvegicus (Rat) protein is B-cell lymphoma/leukemia 10.